Reading from the N-terminus, the 270-residue chain is Phosphatidylglycerol--prolipoprotein diacylglyceryl transferase (270 aa).

Helical transmembrane passes span 19 to 39, 54 to 74, 92 to 112, and 116 to 136; these read FPVY…LWLA, IDLV…YYVI, QGGL…ILFA, and GLSF…GQAI. Position 138 (Arg138) interacts with a 1,2-diacyl-sn-glycero-3-phospho-(1'-sn-glycerol). 3 consecutive transmembrane segments (helical) span residues 178–198, 206–226, and 236–256; these read HPTF…LLAL, GELF…VEGL, and LRIA…FIIV.

The protein belongs to the Lgt family.

The protein resides in the cell membrane. The enzyme catalyses L-cysteinyl-[prolipoprotein] + a 1,2-diacyl-sn-glycero-3-phospho-(1'-sn-glycerol) = an S-1,2-diacyl-sn-glyceryl-L-cysteinyl-[prolipoprotein] + sn-glycerol 1-phosphate + H(+). It functions in the pathway protein modification; lipoprotein biosynthesis (diacylglyceryl transfer). Catalyzes the transfer of the diacylglyceryl group from phosphatidylglycerol to the sulfhydryl group of the N-terminal cysteine of a prolipoprotein, the first step in the formation of mature lipoproteins. This Bacillus mycoides (strain KBAB4) (Bacillus weihenstephanensis) protein is Phosphatidylglycerol--prolipoprotein diacylglyceryl transferase.